The sequence spans 750 residues: Photosystem I P700 chlorophyll a apoprotein A1 (750 aa).

A run of 8 helical transmembrane segments spans residues 70 to 93 (VFSA…FHGA), 156 to 179 (LYCT…FHYH), 195 to 219 (LNHH…HVSL), 291 to 309 (IAHH…GHMY), 346 to 369 (WHAQ…HHMY), 385 to 411 (LSLF…IFMV), 433 to 455 (AIIS…LYIH), and 531 to 549 (FLVH…LILL). 2 residues coordinate [4Fe-4S] cluster: cysteine 573 and cysteine 582. Transmembrane regions (helical) follow at residues 589-610 (HVFL…HFSW) and 664-686 (LSAY…MFLF). Histidine 675 serves as a coordination point for chlorophyll a'. The chlorophyll a site is built by methionine 683 and tyrosine 691. Tryptophan 692 contacts phylloquinone. Residues 724-744 (AVGVTHYLLGGIATTWAFFLA) form a helical membrane-spanning segment.

It belongs to the PsaA/PsaB family. The PsaA/B heterodimer binds the P700 chlorophyll special pair and subsequent electron acceptors. PSI consists of a core antenna complex that captures photons, and an electron transfer chain that converts photonic excitation into a charge separation. The eukaryotic PSI reaction center is composed of at least 11 subunits. The cofactor is P700 is a chlorophyll a/chlorophyll a' dimer, A0 is one or more chlorophyll a, A1 is one or both phylloquinones and FX is a shared 4Fe-4S iron-sulfur center..

Its subcellular location is the plastid. It localises to the chloroplast thylakoid membrane. The enzyme catalyses reduced [plastocyanin] + hnu + oxidized [2Fe-2S]-[ferredoxin] = oxidized [plastocyanin] + reduced [2Fe-2S]-[ferredoxin]. In terms of biological role, psaA and PsaB bind P700, the primary electron donor of photosystem I (PSI), as well as the electron acceptors A0, A1 and FX. PSI is a plastocyanin-ferredoxin oxidoreductase, converting photonic excitation into a charge separation, which transfers an electron from the donor P700 chlorophyll pair to the spectroscopically characterized acceptors A0, A1, FX, FA and FB in turn. Oxidized P700 is reduced on the lumenal side of the thylakoid membrane by plastocyanin. This chain is Photosystem I P700 chlorophyll a apoprotein A1, found in Pelargonium hortorum (Common geranium).